The following is a 330-amino-acid chain: Tryptophan--tRNA ligase (330 aa).

ATP contacts are provided by residues 6-8 and 14-15; these read QPT and GN. The 'HIGH' region signature appears at 7 to 15; it reads PTGSLHLGN. Asp130 provides a ligand contact to L-tryptophan. Residues 142 to 144, Val185, and 194 to 198 contribute to the ATP site; these read GED and KMSKS. Residues 194 to 198 carry the 'KMSKS' region motif; the sequence is KMSKS.

This sequence belongs to the class-I aminoacyl-tRNA synthetase family. Homodimer.

The protein localises to the cytoplasm. The enzyme catalyses tRNA(Trp) + L-tryptophan + ATP = L-tryptophyl-tRNA(Trp) + AMP + diphosphate + H(+). Its function is as follows. Catalyzes the attachment of tryptophan to tRNA(Trp). In Thermosynechococcus vestitus (strain NIES-2133 / IAM M-273 / BP-1), this protein is Tryptophan--tRNA ligase.